A 224-amino-acid chain; its full sequence is Metalloproteinase inhibitor 4 (224 aa).

A signal peptide spans M1 to A29. C30 is a binding site for Zn(2+). 2 involved in metalloproteinase-binding regions span residues C30–A33 and S99–S100. Cystine bridges form between C30/C102, C32/C131, C42/C156, C158/C205, C163/C168, and C176/C197. In terms of domain architecture, NTR spans C30–C156.

It belongs to the protease inhibitor I35 (TIMP) family.

It localises to the secreted. Functionally, complexes with metalloproteinases (such as collagenases) and irreversibly inactivates them by binding to their catalytic zinc cofactor. This Bos taurus (Bovine) protein is Metalloproteinase inhibitor 4 (TIMP4).